A 197-amino-acid polypeptide reads, in one-letter code: Imidazoleglycerol-phosphate dehydratase (197 aa).

The protein belongs to the imidazoleglycerol-phosphate dehydratase family.

Its subcellular location is the cytoplasm. It catalyses the reaction D-erythro-1-(imidazol-4-yl)glycerol 3-phosphate = 3-(imidazol-4-yl)-2-oxopropyl phosphate + H2O. The protein operates within amino-acid biosynthesis; L-histidine biosynthesis; L-histidine from 5-phospho-alpha-D-ribose 1-diphosphate: step 6/9. In Pseudomonas fluorescens (strain Pf0-1), this protein is Imidazoleglycerol-phosphate dehydratase.